Reading from the N-terminus, the 118-residue chain is Small ribosomal subunit protein bTHXc (118 aa).

The N-terminal 55 residues, 1–55 (MASLILGAPPRVTVALPSSRLSSSHSETAGVSLSCFTHQFSLSTSSSSSIPLVYC), are a transit peptide targeting the chloroplast. Residues 61–118 (KTAKGKRFNHSFGNARPRNKSKGRGPERVPVPPAPPRKDKFENDEKIKIDIDESLFSN) form a disordered region. A compositionally biased stretch (basic and acidic residues) spans 96-111 (PRKDKFENDEKIKIDI). The residue at position 117 (Ser117) is a Phosphoserine.

The protein belongs to the bacterial ribosomal protein bTHX family. In terms of assembly, part of the 30S ribosomal subunit.

It is found in the plastid. It localises to the chloroplast. The protein is Small ribosomal subunit protein bTHXc (RPS31) of Arabidopsis thaliana (Mouse-ear cress).